The following is a 96-amino-acid chain: Large ribosomal subunit protein bL28 (96 aa).

It belongs to the bacterial ribosomal protein bL28 family.

In Agrobacterium fabrum (strain C58 / ATCC 33970) (Agrobacterium tumefaciens (strain C58)), this protein is Large ribosomal subunit protein bL28.